Here is a 259-residue protein sequence, read N- to C-terminus: MNKPVLVSFLVSGDPNADATLKFMKALDKYSGVIELGIPFSDPVADGATIQAADVRALSNGFKIAKSFEILKEFRKESNTPVILMTYYNPVYNRGIENFVTQAKEAGANGLIIVDLPLQEATEYRKICKKHEMGTVFLSAPNTPEERLKMSDEASTEFLYLISTFGITGARESFEQMTFDFIKRARKTCKGKICVGFGISKGTHAESLIEQGADGVIVGSAFVDIIKTYGDSNEAITKLEELAKELHNGIEKGFEKRNK.

Active-site proton acceptor residues include Glu35 and Asp46.

Belongs to the TrpA family. As to quaternary structure, tetramer of two alpha and two beta chains.

It carries out the reaction (1S,2R)-1-C-(indol-3-yl)glycerol 3-phosphate + L-serine = D-glyceraldehyde 3-phosphate + L-tryptophan + H2O. The protein operates within amino-acid biosynthesis; L-tryptophan biosynthesis; L-tryptophan from chorismate: step 5/5. The alpha subunit is responsible for the aldol cleavage of indoleglycerol phosphate to indole and glyceraldehyde 3-phosphate. This is Tryptophan synthase alpha chain from Methanococcus vannielii (strain ATCC 35089 / DSM 1224 / JCM 13029 / OCM 148 / SB).